The following is a 558-amino-acid chain: Potassium-transporting ATPase potassium-binding subunit 1 (558 aa).

The next 12 helical transmembrane spans lie at 1–21, 66–86, 127–147, 166–186, 245–265, 281–301, 327–347, 354–374, 377–397, 416–436, 482–502, and 531–551; these read MEII…SGYL, FNGF…WLFL, MIVM…VCIA, IVRF…ILLM, IWSN…MLFL, ALIL…LTMW, FGAG…TGSV, LTPI…VFGG, VGLM…SLMV, IVLV…LAFM, ISTG…QLMI, and IVFI…LGPI.

This sequence belongs to the KdpA family. In terms of assembly, the system is composed of three essential subunits: KdpA, KdpB and KdpC.

The protein localises to the cell membrane. Functionally, part of the high-affinity ATP-driven potassium transport (or Kdp) system, which catalyzes the hydrolysis of ATP coupled with the electrogenic transport of potassium into the cytoplasm. This subunit binds the extracellular potassium ions and delivers the ions to the membrane domain of KdpB through an intramembrane tunnel. The polypeptide is Potassium-transporting ATPase potassium-binding subunit 1 (Staphylococcus aureus (strain Mu50 / ATCC 700699)).